The primary structure comprises 433 residues: uncharacterized protein (433 aa).

The TRAM domain occupies 1-59 (MGEEYEVEIGPVAHGGHCIARTSEGQVLFVRHALPGERVLARVTEGEEGARYLRADAVE). The [4Fe-4S] cluster site is built by cysteine 72, cysteine 80, cysteine 83, and cysteine 168. The S-adenosyl-L-methionine site is built by glutamine 262, tyrosine 291, glutamate 315, and aspartate 359. Cysteine 386 serves as the catalytic Nucleophile.

This sequence belongs to the class I-like SAM-binding methyltransferase superfamily. RNA M5U methyltransferase family.

This is an uncharacterized protein from Streptomyces avermitilis (strain ATCC 31267 / DSM 46492 / JCM 5070 / NBRC 14893 / NCIMB 12804 / NRRL 8165 / MA-4680).